A 767-amino-acid chain; its full sequence is Tetratricopeptide repeat protein 16 (767 aa).

TPR repeat units follow at residues valine 18 to leucine 51, aspartate 53 to asparagine 85, alanine 93 to asparagine 126, serine 128 to lysine 155, alanine 208 to aspartate 241, proline 242 to threonine 275, leucine 288 to glutamate 321, lysine 322 to aspartate 355, and glycine 363 to lysine 396. The disordered stretch occupies residues glutamate 612–serine 733. The segment covering glutamine 684–tryptophan 718 has biased composition (polar residues).

The protein is Tetratricopeptide repeat protein 16 (Ttc16) of Mus musculus (Mouse).